The chain runs to 635 residues: Frizzled and smoothened-like protein C (635 aa).

Positions 1–20 (MKFKLIIFIIIIYIIKILKS) are cleaved as a signal peptide. The Extracellular portion of the chain corresponds to 21–244 (EILNEFGYGL…NKWVQMYKMS (224 aa)). The FZ domain occupies 32-166 (DENLKCLSFI…LTKYGYTENN (135 aa)). Intrachain disulfides connect Cys37–Cys108 and Cys50–Cys101. Residues Asn65, Asn141, Asn156, Asn185, and Asn203 are each glycosylated (N-linked (GlcNAc...) asparagine). Residues 245–265 (IVLSTLSFICSIYNIITFGLL) traverse the membrane as a helical segment. The Cytoplasmic segment spans residues 266–275 (SKLKSKYNLC). A helical transmembrane segment spans residues 276-296 (ITFFSVSTVLMSLMDIVTYGI). At 297–314 (GYEELLCPESGRYAIQSD) the chain is on the extracellular side. The helical transmembrane segment at 315–335 (VACGVTGAFFHIGITTGVLWW) threads the bilayer. Over 336–356 (TTMSICLYSEVKRFKMISFRY) the chain is Cytoplasmic. The helical transmembrane segment at 357–377 (IIIFNSVISLILLIIPLSGQA) threads the bilayer. Residues 378–398 (FMSGNGSLGCWIRKTWYANGT) are Extracellular-facing. 2 N-linked (GlcNAc...) asparagine glycosylation sites follow: Asn382 and Asn396. Residues 399-419 (FWIPCGISLFIGAICIVLVIY) traverse the membrane as a helical segment. The Cytoplasmic segment spans residues 420–440 (EIFKISRNLSKDNKPLMFQIR). Residues 441 to 461 (PFLCVLLVGGSFLYLFIFYFN) traverse the membrane as a helical segment. Residues 462-496 (NERNLDKYKAAIPSYVQCLLSSDENGEDCLTDGPG) lie on the Extracellular side of the membrane. Residues 497–517 (FGAYFTFYFFTRLFGITSFSI) traverse the membrane as a helical segment. The Cytoplasmic portion of the chain corresponds to 518-635 (YGTSKIARDI…SSKDSNTNSF (118 aa)). Residues 559-594 (SISGSNQKRFNRNGSNFNMKQNKSNPNDSISLSVVE) are compositionally biased toward polar residues. The disordered stretch occupies residues 559-635 (SISGSNQKRF…SSKDSNTNSF (77 aa)). Positions 594 to 623 (ESTKKQDTENELESNIETKENRSTDISIEN) form a coiled coil. Over residues 623–635 (NTTSSKDSNTNSF) the composition is skewed to low complexity.

It belongs to the G-protein coupled receptor Fz/Smo family.

The protein resides in the membrane. The polypeptide is Frizzled and smoothened-like protein C (fslC) (Dictyostelium discoideum (Social amoeba)).